Consider the following 465-residue polypeptide: Cysteine--tRNA ligase (465 aa).

Cys-30 is a binding site for Zn(2+). The 'HIGH' region signature appears at 32 to 42 (ITVYDYCHVGH). Zn(2+)-binding residues include Cys-214, His-239, and Glu-243. Positions 271–275 (KMSKS) match the 'KMSKS' region motif. ATP is bound at residue Lys-274.

This sequence belongs to the class-I aminoacyl-tRNA synthetase family. In terms of assembly, monomer. The cofactor is Zn(2+).

The protein resides in the cytoplasm. It carries out the reaction tRNA(Cys) + L-cysteine + ATP = L-cysteinyl-tRNA(Cys) + AMP + diphosphate. The protein is Cysteine--tRNA ligase of Burkholderia ambifaria (strain ATCC BAA-244 / DSM 16087 / CCUG 44356 / LMG 19182 / AMMD) (Burkholderia cepacia (strain AMMD)).